The following is a 915-amino-acid chain: Translation initiation factor IF-2 (915 aa).

The segment covering 83–94 (QSRRAVEKEQIL) has biased composition (basic and acidic residues). 3 disordered regions span residues 83 to 177 (QSRR…PEPP), 216 to 280 (EADR…KPAV), and 293 to 328 (ISGM…LLRE). 2 stretches are compositionally biased toward low complexity: residues 111–129 (VRAA…EAPS) and 137–164 (APAT…LSAP). Residues 165–177 (LPEPVPEPVPEPP) show a composition bias toward pro residues. Over residues 293–305 (ISGMDDSSGTGSR) the composition is skewed to polar residues. Over residues 314–328 (MEREREQEEADLLRE) the composition is skewed to basic and acidic residues. A tr-type G domain is found at 412–582 (TRPPVVTIMG…LTEAEMRELK (171 aa)). Positions 421–428 (GHVDHGKT) are G1. GTP is bound at residue 421-428 (GHVDHGKT). The interval 446 to 450 (GITQH) is G2. A G3 region spans residues 468–471 (DTPG). GTP contacts are provided by residues 468 to 472 (DTPGH) and 522 to 525 (NKMD). Residues 522–525 (NKMD) are G4. Residues 558–560 (SAK) are G5.

Belongs to the TRAFAC class translation factor GTPase superfamily. Classic translation factor GTPase family. IF-2 subfamily.

Its subcellular location is the cytoplasm. Its function is as follows. One of the essential components for the initiation of protein synthesis. Protects formylmethionyl-tRNA from spontaneous hydrolysis and promotes its binding to the 30S ribosomal subunits. Also involved in the hydrolysis of GTP during the formation of the 70S ribosomal complex. In Chlorobium luteolum (strain DSM 273 / BCRC 81028 / 2530) (Pelodictyon luteolum), this protein is Translation initiation factor IF-2.